The chain runs to 374 residues: Anhydro-N-acetylmuramic acid kinase (374 aa).

Residue 12–19 (GTSLDGID) coordinates ATP.

This sequence belongs to the anhydro-N-acetylmuramic acid kinase family.

It carries out the reaction 1,6-anhydro-N-acetyl-beta-muramate + ATP + H2O = N-acetyl-D-muramate 6-phosphate + ADP + H(+). It participates in amino-sugar metabolism; 1,6-anhydro-N-acetylmuramate degradation. Its pathway is cell wall biogenesis; peptidoglycan recycling. Functionally, catalyzes the specific phosphorylation of 1,6-anhydro-N-acetylmuramic acid (anhMurNAc) with the simultaneous cleavage of the 1,6-anhydro ring, generating MurNAc-6-P. Is required for the utilization of anhMurNAc either imported from the medium or derived from its own cell wall murein, and thus plays a role in cell wall recycling. The polypeptide is Anhydro-N-acetylmuramic acid kinase (Sodalis glossinidius (strain morsitans)).